Reading from the N-terminus, the 278-residue chain is Non-homologous end joining protein Ku (278 aa).

Residues 9 to 172 (ISFGLVNIPV…MHFAQELVDV (164 aa)) form the Ku domain. A disordered region spans residues 255-278 (NQTGAGAKKKPAKTAKRGKSRKAA). Over residues 261-278 (AKKKPAKTAKRGKSRKAA) the composition is skewed to basic residues.

The protein belongs to the prokaryotic Ku family. Homodimer. Interacts with LigD.

With LigD forms a non-homologous end joining (NHEJ) DNA repair enzyme, which repairs dsDNA breaks with reduced fidelity. Binds linear dsDNA with 5'- and 3'- overhangs but not closed circular dsDNA nor ssDNA. Recruits and stimulates the ligase activity of LigD. This Opitutus terrae (strain DSM 11246 / JCM 15787 / PB90-1) protein is Non-homologous end joining protein Ku.